Here is a 216-residue protein sequence, read N- to C-terminus: Ribonuclease T (216 aa).

In terms of domain architecture, Exonuclease spans Val28–Phe202. 4 residues coordinate Mg(2+): Asp31, Glu33, His189, and Asp194. Residue His189 is the Proton donor/acceptor of the active site.

It belongs to the RNase T family. Homodimer. The cofactor is Mg(2+).

Its function is as follows. Trims short 3' overhangs of a variety of RNA species, leaving a one or two nucleotide 3' overhang. Responsible for the end-turnover of tRNA: specifically removes the terminal AMP residue from uncharged tRNA (tRNA-C-C-A). Also appears to be involved in tRNA biosynthesis. The sequence is that of Ribonuclease T from Xanthomonas campestris pv. campestris (strain 8004).